A 153-amino-acid chain; its full sequence is MSQKACYVCGKIGHLAEDCDSERLCYNCNKPGHVQTDCTMPRTVEFKQCYNCGETGHVRSECTVQRCFNCNQTGHISRECPEPKKTSRFSKVSCYKCGGPNHMAKDCMKEDGISGLKCYTCGQAGHMSRDCQNDRLCYNCNETGHISKDCPKA.

7 CCHC-type zinc fingers span residues 4 to 21 (KACY…DCDS), 23 to 40 (RLCY…DCTM), 47 to 64 (KQCY…ECTV), 65 to 82 (QRCF…ECPE), 92 to 109 (VSCY…DCMK), 116 to 133 (LKCY…DCQN), and 135 to 152 (RLCY…DCPK).

The protein resides in the cytoplasm. Functionally, may act in the sexual differentiation pathway. The sequence is that of Zinc finger protein GIS2 (GIS2) from Saccharomyces cerevisiae (strain ATCC 204508 / S288c) (Baker's yeast).